We begin with the raw amino-acid sequence, 514 residues long: Na(+)/H(+) antiporter NhaB (514 aa).

12 helical membrane-spanning segments follow: residues 23–43, 63–83, 97–117, 120–140, 144–164, 202–222, 238–258, 303–323, 357–377, 391–411, 447–467, and 475–495; these read LALLVFLIVNPFIFLANPFVA, PLLPGGLLAIEAVIIGMTSAA, LLLMFMVAGIYFMKQLLLFIF, LLLSIRSKMVLSLAFCVAAAF, FLDALTVVAVVISVAVGFYGI, LMMHAGVGTALGGVMTMVGEP, FFLRMSPVTVPVLVCGLLTCM, AVIGVWLVTALALHLAEVGLI, LTVFFSIVAVIIDQHLFAPII, LFYLFNGLLSSISDNVFVGTI, ATPNGQAAFLFLLTSALAPLI, and VWMALPYTIVLTLIGLLCVEF.

The protein belongs to the NhaB Na(+)/H(+) (TC 2.A.34) antiporter family.

The protein resides in the cell inner membrane. It carries out the reaction 2 Na(+)(in) + 3 H(+)(out) = 2 Na(+)(out) + 3 H(+)(in). Na(+)/H(+) antiporter that extrudes sodium in exchange for external protons. In Salmonella agona (strain SL483), this protein is Na(+)/H(+) antiporter NhaB.